Here is a 359-residue protein sequence, read N- to C-terminus: MALVPLRLLLDHAAENGYGIPAFNVNNLEQIQAILKAAVETDSPVILQASRGARAYAGENFLRHLILAAVETYPHIPIVMHQDHGNAPATCYSAIKNNFTSVMMDGSLEADAKTPASFEYNVNVTREVVNVAHALGVSVEGELGCLGSLETGAGEAEDGHGFEGTLDHSQLLTDPDEAVEFVEATQVDALAVAIGTSHGAYKFTRKPTGEILAISRIEEIHRRLPNTHLVMHGSSSVPEDLLALINQYGGAIPETYGVPVEEIQKGIKSGVRKVNIDTDNRLAITAAVREACAKKPEEFDPRHFLKPSITYMQKVCAERYQQFGTAGNASKIKQISLEDFAAKYAKGELNVVTKAAAKV.

Ser-50 is a D-glyceraldehyde 3-phosphate binding site. The Proton donor role is filled by Asp-83. The Zn(2+) site is built by His-84, Asp-105, Glu-142, and His-198. Residue Gly-199 coordinates dihydroxyacetone phosphate. His-232 contacts Zn(2+). Dihydroxyacetone phosphate is bound by residues Gly-233–Ser-235 and Asn-275–Thr-278.

The protein belongs to the class II fructose-bisphosphate aldolase family. The cofactor is Zn(2+).

The enzyme catalyses beta-D-fructose 1,6-bisphosphate = D-glyceraldehyde 3-phosphate + dihydroxyacetone phosphate. The protein operates within carbohydrate degradation; glycolysis; D-glyceraldehyde 3-phosphate and glycerone phosphate from D-glucose: step 4/4. Functionally, catalyzes the aldol condensation of dihydroxyacetone phosphate (DHAP or glycerone-phosphate) with glyceraldehyde 3-phosphate (G3P) to form fructose 1,6-bisphosphate (FBP) in gluconeogenesis and the reverse reaction in glycolysis. This is Fructose-bisphosphate aldolase (fba) from Nostoc commune.